We begin with the raw amino-acid sequence, 439 residues long: MEQFSAFKLLLKKQYETTLGFYDKYIKNLKRFALKNNVLFVIVDNEFARETLNSNPDIVGLASKLYDDIRAVRFVNEQDFFINLAKLEEDNRETLYQSSGLSKNFTFKNFVVGDGNRRVYEAGVRISETQDADFSPLFIYGETGLGKTHLLQAIGNDKFFHFPNAKVKYVVSSDFAQEVVNAFYQKEKDQGIEKLKAAYESLDLLLIDDTQIFGKKEKTLEILFSIFNNLVSKGKQIVFVSDKTPDELANIDPRMVSRFKSGLLLKIEKHNLSSLCEILAVKLKEKDPNIQITNEAREKAAQISGNDVRSLNGIATKLLFYVKTTKQNLINNDNLKEILFEEFEKFHKKSFDPYLLIENVCRRFNVPVDSVLSENRKAELVRVRDVCNYILREKYKMQFQQIGKIFKRNHSTVVAAVKRVAKMIEKDDSLQDIITSLVI.

The interval 1-72 is domain I, interacts with DnaA modulators; that stretch reads MEQFSAFKLL…SKLYDDIRAV (72 aa). Positions 72 to 99 are domain II; the sequence is VRFVNEQDFFINLAKLEEDNRETLYQSS. Residues 100–322 are domain III, AAA+ region; the sequence is GLSKNFTFKN…GIATKLLFYV (223 aa). ATP contacts are provided by G144, G146, K147, and T148. The domain IV, binds dsDNA stretch occupies residues 323-439; the sequence is KTTKQNLINN…LQDIITSLVI (117 aa).

This sequence belongs to the DnaA family. Oligomerizes as a right-handed, spiral filament on DNA at oriC.

Its subcellular location is the cytoplasm. Plays an essential role in the initiation and regulation of chromosomal replication. ATP-DnaA binds to the origin of replication (oriC) to initiate formation of the DNA replication initiation complex once per cell cycle. Binds the DnaA box (a 9 base pair repeat at the origin) and separates the double-stranded (ds)DNA. Forms a right-handed helical filament on oriC DNA; dsDNA binds to the exterior of the filament while single-stranded (ss)DNA is stabiized in the filament's interior. The ATP-DnaA-oriC complex binds and stabilizes one strand of the AT-rich DNA unwinding element (DUE), permitting loading of DNA polymerase. After initiation quickly degrades to an ADP-DnaA complex that is not apt for DNA replication. Binds acidic phospholipids. In Mycoplasma pneumoniae (strain ATCC 29342 / M129 / Subtype 1) (Mycoplasmoides pneumoniae), this protein is Chromosomal replication initiator protein DnaA.